The sequence spans 142 residues: Large ribosomal subunit protein uL13 (142 aa).

The protein belongs to the universal ribosomal protein uL13 family. Part of the 50S ribosomal subunit.

In terms of biological role, this protein is one of the early assembly proteins of the 50S ribosomal subunit, although it is not seen to bind rRNA by itself. It is important during the early stages of 50S assembly. This Laribacter hongkongensis (strain HLHK9) protein is Large ribosomal subunit protein uL13.